A 386-amino-acid polypeptide reads, in one-letter code: Palmitoyltransferase ZDHHC18 (386 aa).

Positions 1-65 (MKDCEYQQIS…GSGSLGRRPR (65 aa)) are disordered. Over 1 to 88 (MKDCEYQQIS…CGGRLMLAGH (88 aa)) the chain is Cytoplasmic. At Ser-19 the chain carries Phosphoserine. Over residues 27 to 40 (PAAPPGPSPGPAPG) the composition is skewed to pro residues. The segment covering 49–59 (SGSGSGSGSGS) has biased composition (gly residues). The chain crosses the membrane as a helical span at residues 89–109 (GGVFALTLLLILSTTILFFIF). Topologically, residues 110–117 (DCPYLART) are lumenal. Residues 118–138 (LTLAIPIIAAILFFFVMSCLL) traverse the membrane as a helical segment. Residues 139-233 (QTSFTDPGIL…GNCVGRRNYR (95 aa)) lie on the Cytoplasmic side of the membrane. The 51-residue stretch at 190–240 (KYCFTCKMFRPPRTSHCSVCDNCVERFDHHCPWVGNCVGRRNYRFFYAFIL) folds into the DHHC domain. Cys-220 functions as the S-palmitoyl cysteine intermediate in the catalytic mechanism. The chain crosses the membrane as a helical span at residues 234–254 (FFYAFILSLSFLTAFIFACVV). Residues 255-275 (THLTLLSQGSNFLSALNKTPA) lie on the Lumenal side of the membrane. Residues 276–296 (GVLELVICFFSIWSILGLSGF) form a helical membrane-spanning segment. The Cytoplasmic segment spans residues 297–386 (HTYLVASNLT…PDASMVGGHP (90 aa)). The disordered stretch occupies residues 362–386 (LPSPIRSDEPACGAKPDASMVGGHP).

This sequence belongs to the DHHC palmitoyltransferase family. ERF2/ZDHHC9 subfamily.

The protein resides in the golgi apparatus membrane. It carries out the reaction L-cysteinyl-[protein] + hexadecanoyl-CoA = S-hexadecanoyl-L-cysteinyl-[protein] + CoA. Palmitoyltransferase that catalyzes the addition of palmitate onto various protein substrates, such as CGAS, HRAS and LCK. Acts as a negative regulator of the cGAS-STING pathway be mediating palmitoylation and inactivation of CGAS. May also have a palmitoyltransferase activity toward the beta-2 adrenergic receptor/ADRB2 and therefore regulate G protein-coupled receptor signaling. The sequence is that of Palmitoyltransferase ZDHHC18 from Rattus norvegicus (Rat).